The chain runs to 338 residues: Heat-inducible transcription repressor HrcA (338 aa).

The protein belongs to the HrcA family.

Its function is as follows. Negative regulator of class I heat shock genes (grpE-dnaK-dnaJ and groELS operons). Prevents heat-shock induction of these operons. The polypeptide is Heat-inducible transcription repressor HrcA (Bacillus cereus (strain AH820)).